The sequence spans 842 residues: Gamma-aminobutyric acid type B receptor subunit 2 (842 aa).

Positions 1–17 (MSRWLSLLLFAVQAVGG) are cleaved as a signal peptide. Residues 18-438 (YEAGEELSCK…TERRREHISS (421 aa)) are Extracellular-facing. N-linked (GlcNAc...) asparagine glycans are attached at residues Asn274, Asn279, Asn327, and Asn366. Residues 439–459 (ILFLAMSLLALIGIFLALIFL) traverse the membrane as a helical segment. Over 460 to 477 (LINFRYRNHRFIKMSSPN) the chain is Cytoplasmic. The chain crosses the membrane as a helical span at residues 478–498 (LNNIIIAGSICTFASVIMLGL). The Extracellular portion of the chain corresponds to 499–506 (DTRIVSPD). A helical membrane pass occupies residues 507–527 (VFVWLCYTKTWTLCIGFTLSF). Residues 528 to 556 (GAMFSKTWRVHSIFTNIRMDRKAIKDSKL) lie on the Cytoplasmic side of the membrane. Residues 557-577 (FIILGILLFIDICVLVTWAFV) form a helical membrane-spanning segment. Over 578-610 (SPFSYTVTELPHIPEDNIVIIPEVEKCNSSHSG) the chain is Extracellular. An N-linked (GlcNAc...) asparagine glycan is attached at Asn605. Residues 611–631 (VFQAVLYAVKGVLMILGCFLA) form a helical membrane-spanning segment. At 632-647 (WETRHVNVPALNDSKY) the chain is on the cytoplasmic side. A helical transmembrane segment spans residues 648–668 (IGTSVYCCVVMSVLGLSTSVI). Topologically, residues 669–676 (LQERVNEM) are extracellular. A helical transmembrane segment spans residues 677–697 (FSLASFFVIFSTTLTLCLVFV). Topologically, residues 698–842 (PKVIELARNP…VDPDEPSTKL (145 aa)) are cytoplasmic. Positions 725–740 (AKTSQPMSPQPRSDSS) are enriched in polar residues. Disordered regions lie at residues 725–744 (AKTS…GDLI) and 791–842 (SPSS…STKL).

Belongs to the G-protein coupled receptor 3 family. May form a heterodimer with gbb-1. In terms of tissue distribution, expressed in cholinergic motor neurons.

Its subcellular location is the cell membrane. Functionally, component of a heterodimeric G-protein coupled receptor for GABA, formed by gbb-1 and gbb-2. Within the heterodimeric GABA receptor, only gbb-1 seems to bind agonists, while gbb-2 mediates coupling to G proteins. Ligand binding causes a conformation change that triggers signaling via guanine nucleotide-binding proteins (G proteins) and modulates the activity of down-stream effectors, such as adenylate cyclase. Signaling inhibits adenylate cyclase, stimulates phospholipase A2, activates potassium channels, inactivates voltage-dependent calcium-channels and modulates inositol phospholipid hydrolysis. Plays a critical role in the fine-tuning of inhibitory synaptic transmission. Pre-synaptic GABA receptor inhibits neurotransmitter release by down-regulating high-voltage activated calcium channels, whereas postsynaptic GABA receptor decreases neuronal excitability by activating a prominent inwardly rectifying potassium (Kir) conductance that underlies the late inhibitory postsynaptic potentials. Along with gbb-1, may couple to the G(o)-alpha G-protein goa-1 to negatively regulate cholinergic receptor activity in the presence of high levels of acetylcholine in ventral cord motor neurons. As acetylcholine depolarizes body wall muscles, modulation of acetylcholine levels most likely results in the control of locomotory behavior. Regulates locomotory behavior in response to GABA release by GABAergic motor neurons. This Caenorhabditis elegans protein is Gamma-aminobutyric acid type B receptor subunit 2.